The sequence spans 399 residues: F-box protein At1g10110 (399 aa).

One can recognise an F-box domain in the interval 9 to 56 (PNWSELVTDILSLVFKHLSFTDFARAKTVCSSWYFASKSSSPRKNHTP).

This chain is F-box protein At1g10110, found in Arabidopsis thaliana (Mouse-ear cress).